A 421-amino-acid chain; its full sequence is Gamma-glutamyl phosphate reductase (421 aa).

This sequence belongs to the gamma-glutamyl phosphate reductase family.

The protein resides in the cytoplasm. The enzyme catalyses L-glutamate 5-semialdehyde + phosphate + NADP(+) = L-glutamyl 5-phosphate + NADPH + H(+). It functions in the pathway amino-acid biosynthesis; L-proline biosynthesis; L-glutamate 5-semialdehyde from L-glutamate: step 2/2. Functionally, catalyzes the NADPH-dependent reduction of L-glutamate 5-phosphate into L-glutamate 5-semialdehyde and phosphate. The product spontaneously undergoes cyclization to form 1-pyrroline-5-carboxylate. The protein is Gamma-glutamyl phosphate reductase of Pseudomonas syringae pv. tomato (strain ATCC BAA-871 / DC3000).